The sequence spans 165 residues: SsrA-binding protein (165 aa).

The interval 141–165 (KLHDKRQEEKRKQADREVKSALARY) is disordered. Residues 145–159 (KRQEEKRKQADREVK) show a composition bias toward basic and acidic residues.

This sequence belongs to the SmpB family.

Its subcellular location is the cytoplasm. Its function is as follows. Required for rescue of stalled ribosomes mediated by trans-translation. Binds to transfer-messenger RNA (tmRNA), required for stable association of tmRNA with ribosomes. tmRNA and SmpB together mimic tRNA shape, replacing the anticodon stem-loop with SmpB. tmRNA is encoded by the ssrA gene; the 2 termini fold to resemble tRNA(Ala) and it encodes a 'tag peptide', a short internal open reading frame. During trans-translation Ala-aminoacylated tmRNA acts like a tRNA, entering the A-site of stalled ribosomes, displacing the stalled mRNA. The ribosome then switches to translate the ORF on the tmRNA; the nascent peptide is terminated with the 'tag peptide' encoded by the tmRNA and targeted for degradation. The ribosome is freed to recommence translation, which seems to be the essential function of trans-translation. The protein is SsrA-binding protein of Prochlorococcus marinus (strain MIT 9303).